A 305-amino-acid polypeptide reads, in one-letter code: Ribosomal RNA small subunit methyltransferase H (305 aa).

Residues G33–Y35, D51, F78, D96, and Q103 contribute to the S-adenosyl-L-methionine site.

This sequence belongs to the methyltransferase superfamily. RsmH family.

The protein resides in the cytoplasm. The catalysed reaction is cytidine(1402) in 16S rRNA + S-adenosyl-L-methionine = N(4)-methylcytidine(1402) in 16S rRNA + S-adenosyl-L-homocysteine + H(+). Its function is as follows. Specifically methylates the N4 position of cytidine in position 1402 (C1402) of 16S rRNA. In Rickettsia bellii (strain RML369-C), this protein is Ribosomal RNA small subunit methyltransferase H.